The sequence spans 396 residues: GDSL esterase/lipase ACHE (396 aa).

The first 31 residues, 1 to 31 (MATAATATAGSRAAVLLLLSLALALALRPSD), serve as a signal peptide directing secretion. Catalysis depends on S49, which acts as the Nucleophile. N-linked (GlcNAc...) asparagine glycans are attached at residues N108, N126, N151, N196, and N339. Catalysis depends on residues D359 and H362.

It belongs to the 'GDSL' lipolytic enzyme family.

The protein resides in the secreted. Its function is as follows. Esterase that can hydrolyze acetylthiocholine and propionylthiocholine in vitro. Substrate preference is propionylthiocholine &gt; acetylthiocholine. Possesses extremely low activity against butyrylthiocholine. The protein is GDSL esterase/lipase ACHE of Zea mays (Maize).